Reading from the N-terminus, the 167-residue chain is Phosphopantetheine adenylyltransferase (167 aa).

Substrate is bound at residue Ser11. Residues 11–12 (SF) and His19 contribute to the ATP site. Substrate is bound by residues Lys43, Thr76, and Arg90. Residues 91–93 (GIR), Glu101, and 126–132 (YDALSST) contribute to the ATP site.

It belongs to the bacterial CoaD family. As to quaternary structure, homohexamer. The cofactor is Mg(2+).

The protein resides in the cytoplasm. The enzyme catalyses (R)-4'-phosphopantetheine + ATP + H(+) = 3'-dephospho-CoA + diphosphate. It functions in the pathway cofactor biosynthesis; coenzyme A biosynthesis; CoA from (R)-pantothenate: step 4/5. In terms of biological role, reversibly transfers an adenylyl group from ATP to 4'-phosphopantetheine, yielding dephospho-CoA (dPCoA) and pyrophosphate. In Lacticaseibacillus paracasei (strain ATCC 334 / BCRC 17002 / CCUG 31169 / CIP 107868 / KCTC 3260 / NRRL B-441) (Lactobacillus paracasei), this protein is Phosphopantetheine adenylyltransferase.